A 221-amino-acid chain; its full sequence is Probable nicotinate-nucleotide adenylyltransferase (221 aa).

It belongs to the NadD family.

It carries out the reaction nicotinate beta-D-ribonucleotide + ATP + H(+) = deamido-NAD(+) + diphosphate. It functions in the pathway cofactor biosynthesis; NAD(+) biosynthesis; deamido-NAD(+) from nicotinate D-ribonucleotide: step 1/1. Catalyzes the reversible adenylation of nicotinate mononucleotide (NaMN) to nicotinic acid adenine dinucleotide (NaAD). This chain is Probable nicotinate-nucleotide adenylyltransferase, found in Marinomonas sp. (strain MWYL1).